A 490-amino-acid polypeptide reads, in one-letter code: GTPase Der (490 aa).

2 consecutive EngA-type G domains span residues 3–167 and 203–378; these read FTLA…DAFE and LQVA…EVWN. GTP-binding positions include 9 to 16, 56 to 60, 119 to 122, 209 to 216, 256 to 260, and 321 to 324; these read GRPNVGKS, DTAGL, NKAE, GRPNAGKS, DTAGM, and NKWD. Positions 379–465 constitute a KH-like domain; that stretch reads RRVPTAALNR…RLTMRSQSDA (87 aa). A disordered region spans residues 451-490; it reads PGTPIRLTMRSQSDANPYKNRKKSTPSRLRKHLGKPSLKG. A compositionally biased stretch (basic residues) spans 469–484; the sequence is KNRKKSTPSRLRKHLG.

The protein belongs to the TRAFAC class TrmE-Era-EngA-EngB-Septin-like GTPase superfamily. EngA (Der) GTPase family. As to quaternary structure, associates with the 50S ribosomal subunit.

In terms of biological role, GTPase that plays an essential role in the late steps of ribosome biogenesis. The sequence is that of GTPase Der from Dinoroseobacter shibae (strain DSM 16493 / NCIMB 14021 / DFL 12).